A 274-amino-acid chain; its full sequence is MSLQNDIIKELGVKPTIVPKEEIRRSLDFLKAYLLKHPFLKTLVLGISGGQDSTLAGRLAQLAVEELRQETGDQSYRFIAIRLPYGVQADEADAQKALAFIRPDQTLTINIKAAVDGQVEALKAAGIEITDFNKGNIKARQRMISQYAVAGQTSGAVIGTDHAAENITGFFTKFGDGGADILPLFRLNKRQGKALLREMGADASLYEKVPTADLEENKPGLADEVALGVTYNDIDDYLEGKEISKEAQEKIESWWYKGLHKRHLPITIFDDFWK.

46–53 (GISGGQDS) is an ATP binding site. D52 lines the Mg(2+) pocket. R140 is a binding site for deamido-NAD(+). T160 contributes to the ATP binding site. E165 provides a ligand contact to Mg(2+). K173 and D180 together coordinate deamido-NAD(+). Residues K189 and T211 each coordinate ATP. 260-261 (HK) serves as a coordination point for deamido-NAD(+).

It belongs to the NAD synthetase family. As to quaternary structure, homodimer.

It catalyses the reaction deamido-NAD(+) + NH4(+) + ATP = AMP + diphosphate + NAD(+) + H(+). It functions in the pathway cofactor biosynthesis; NAD(+) biosynthesis; NAD(+) from deamido-NAD(+) (ammonia route): step 1/1. Its function is as follows. Catalyzes the ATP-dependent amidation of deamido-NAD to form NAD. Uses ammonia as a nitrogen source. This Streptococcus uberis (strain ATCC BAA-854 / 0140J) protein is NH(3)-dependent NAD(+) synthetase.